A 96-amino-acid chain; its full sequence is MKFRPLHDRVVVRRIESEEKTKGGIIIPDTAKEKPQEGEIVAVGPGARDEQGRVNALDVKVGDRVLFGKWSGTEVKIDGQDLLIMKESDIMGVVAA.

This sequence belongs to the GroES chaperonin family. Heptamer of 7 subunits arranged in a ring. Interacts with the chaperonin GroEL.

Its subcellular location is the cytoplasm. Together with the chaperonin GroEL, plays an essential role in assisting protein folding. The GroEL-GroES system forms a nano-cage that allows encapsulation of the non-native substrate proteins and provides a physical environment optimized to promote and accelerate protein folding. GroES binds to the apical surface of the GroEL ring, thereby capping the opening of the GroEL channel. The protein is Co-chaperonin GroES of Methylorubrum populi (strain ATCC BAA-705 / NCIMB 13946 / BJ001) (Methylobacterium populi).